The sequence spans 433 residues: MNIAVVGLSHKTAPVDVREKLSIPDDVKEKATSQLRSYPHLEEVAILSTCNRMEVYVVAQETDDGIRELTQFLSEWSQIPLLELRQHLFILLHQDAVMHLMRVSAGLDSLVLGEGQILAQVKQTHKLSQKYSGAGPILNRLFKQAISAGKRVRTETSIGTGAVSISSAAVELAQIKTEDLSAHRVAIIGAGKMSRLLVKHLLSKGANQIAILNRSLKRAEQLADQFQGADLKLHTLADMQAVLTESDLIFTSTASTEPLLDRDILEPIVCDRQSCMIFDISVPRNVHSNVNELSQVHAFNVDDLKAVVAQNQESRRQMALEAESLLEEEVASFDVWWRSLETVPTISSLRTKVESIREQELEKALSRLGTEFAEKHQEVIEALTRGIVNKILHDPMVQLRAQQDIEVRRKAMQSLNMLFNLNSSQGVAKQRNT.

Residues Thr49–Arg52, Ser109, Glu114–Gln116, and Gln120 each bind substrate. Cys50 acts as the Nucleophile in catalysis. An NADP(+)-binding site is contributed by Gly189–Ser194.

It belongs to the glutamyl-tRNA reductase family. Homodimer.

It carries out the reaction (S)-4-amino-5-oxopentanoate + tRNA(Glu) + NADP(+) = L-glutamyl-tRNA(Glu) + NADPH + H(+). Its pathway is porphyrin-containing compound metabolism; protoporphyrin-IX biosynthesis; 5-aminolevulinate from L-glutamyl-tRNA(Glu): step 1/2. It functions in the pathway porphyrin-containing compound metabolism; chlorophyll biosynthesis. Catalyzes the NADPH-dependent reduction of glutamyl-tRNA(Glu) to glutamate 1-semialdehyde (GSA). The chain is Glutamyl-tRNA reductase from Acaryochloris marina (strain MBIC 11017).